Here is a 511-residue protein sequence, read N- to C-terminus: MEQAQWVDPALFSAFVSIIFFFLGMFLGRISLGVGKGAAPRSPSSTEWPDGPPKLPIIGNLHQLNKGGELVHHKLAKLAQSYDRAMTIWVGSWGPMIVVSDADLAWEVLVTKSPDFAGRVLSKLSHLFNADYNTVVAYDAGPQWQSLRRGLQHGPLGPAHVSAQARFHEEDMKLLVSDMMRAAKKGGNNGVVEPLAYVRRATIRFLSRLCFGEAFNDEAFVEGMDEAVEETIRATGHARILDAFYFTRHLPIIRRSFMNTVAAKKKIESLVRPLLSRPAPPGSYLHFLLSTDAPESMIIFRIFEVYLLGVDSTASTTTWALAFLVSNQQAQEKLHNELAQYCASQNNQNIKAEDVGKLSYLLGVVKETMRMKPIAPLAVPHKTLKETMLDGKRVAAGTTVVVNLYAVHYNPKLWPEPEQFRPERFVIGASGGNGGGSSEYMLQSYLPFGGGMRACAGMEVGKLQVAMVVANLVMSFKWLPEAEGKMPDLAEDMTFVLMMKKPLAAKIVPRA.

Residues 7 to 27 (VDPALFSAFVSIIFFFLGMFL) form a helical membrane-spanning segment. Cys455 is a heme binding site.

The protein belongs to the cytochrome P450 family. Heme is required as a cofactor. As to expression, specifically expressed in immature fruits and roots. Barely detectable in young leaves and flowering spadices.

Its subcellular location is the membrane. The protein localises to the endoplasmic reticulum membrane. The enzyme catalyses (E,E)-feruperate + reduced [NADPH--hemoprotein reductase] + O2 = (E,E)-piperate + oxidized [NADPH--hemoprotein reductase] + 2 H2O + H(+). It functions in the pathway aromatic compound metabolism. Cytochrome P450 monooxygenase involved in the biosynthesis of aromatic piperamides natural products such as piperine (1-piperoyl-piperidine), the pungent principle contributing, together with several terpenoids, to the aromatic properties of black pepper fruits, and displaying numerous pharmacological activities such as antiproliferative, antitumor, antiangiogenesis, antioxidant, antidiabetic, antiobesity, cardioprotective, antimicrobial, antiaging, and immunomodulatory effects. Catalyzes the conversion of feruperic acid (5-(4-hydroxy-3-methoxyphenyl)-2,4-pentadienoic acid) to piperic acid. Inactive toward ferulic acid and feruperine. The sequence is that of Piperic acid synthase CYP719A37 from Piper nigrum (Black pepper).